Consider the following 110-residue polypeptide: Protein YcgL (110 aa).

The YcgL domain maps to 14–98; it reads MFCVIYRSSK…PPEDLLKQHL (85 aa). Residues 87–110 are disordered; sequence PPPPEDLLKQHLSSVGQNTSSADR. Polar residues predominate over residues 97 to 110; the sequence is HLSSVGQNTSSADR.

The chain is Protein YcgL from Salmonella newport (strain SL254).